The following is an 85-amino-acid chain: Homeobox protein knotted-1-like 7 (85 aa).

The ELK domain occupies 1-21 (ELKNELKQGYKEKLVDIREEI). Positions 22-85 (MRKRRAGKLP…NQRKRNWHSN (64 aa)) form a DNA-binding region, homeobox; TALE-type.

Belongs to the TALE/KNOX homeobox family. In terms of tissue distribution, expressed in all tissues examined. Highest expression in leaves.

Its subcellular location is the nucleus. This is Homeobox protein knotted-1-like 7 (KNOX7) from Zea mays (Maize).